A 66-amino-acid polypeptide reads, in one-letter code: Large ribosomal subunit protein bL28 (66 aa).

Belongs to the bacterial ribosomal protein bL28 family.

The sequence is that of Large ribosomal subunit protein bL28 from Oenococcus oeni (strain ATCC BAA-331 / PSU-1).